We begin with the raw amino-acid sequence, 363 residues long: Phosphoserine aminotransferase (363 aa).

Arg41 lines the L-glutamate pocket. Pyridoxal 5'-phosphate-binding positions include 75–76, Trp100, Thr155, Asp175, and Gln198; that span reads AS. Lys199 is subject to N6-(pyridoxal phosphate)lysine. Residue 239-240 participates in pyridoxal 5'-phosphate binding; it reads NT.

This sequence belongs to the class-V pyridoxal-phosphate-dependent aminotransferase family. SerC subfamily. In terms of assembly, homodimer. Pyridoxal 5'-phosphate serves as cofactor.

The protein resides in the cytoplasm. The enzyme catalyses O-phospho-L-serine + 2-oxoglutarate = 3-phosphooxypyruvate + L-glutamate. It catalyses the reaction 4-(phosphooxy)-L-threonine + 2-oxoglutarate = (R)-3-hydroxy-2-oxo-4-phosphooxybutanoate + L-glutamate. It participates in amino-acid biosynthesis; L-serine biosynthesis; L-serine from 3-phospho-D-glycerate: step 2/3. Functionally, catalyzes the reversible conversion of 3-phosphohydroxypyruvate to phosphoserine and of 3-hydroxy-2-oxo-4-phosphonooxybutanoate to phosphohydroxythreonine. In Streptococcus suis (strain 98HAH33), this protein is Phosphoserine aminotransferase.